A 262-amino-acid chain; its full sequence is Dihydroorotate dehydrogenase B (NAD(+)), electron transfer subunit (262 aa).

One can recognise an FAD-binding FR-type domain in the interval 3–104; it reads KLQEMMTIVS…MGPLGNGFPV (102 aa). Residues 53–56, 70–72, and 79–80 contribute to the FAD site; these read RPIS, LYR, and GT. Cys-226, Cys-231, Cys-234, and Cys-249 together coordinate [2Fe-2S] cluster.

This sequence belongs to the PyrK family. As to quaternary structure, heterotetramer of 2 PyrK and 2 PyrD type B subunits. The cofactor is [2Fe-2S] cluster. FAD is required as a cofactor.

It participates in pyrimidine metabolism; UMP biosynthesis via de novo pathway; orotate from (S)-dihydroorotate (NAD(+) route): step 1/1. Responsible for channeling the electrons from the oxidation of dihydroorotate from the FMN redox center in the PyrD type B subunit to the ultimate electron acceptor NAD(+). This chain is Dihydroorotate dehydrogenase B (NAD(+)), electron transfer subunit, found in Lactococcus lactis subsp. lactis (strain IL1403) (Streptococcus lactis).